A 499-amino-acid chain; its full sequence is Low-affinity inorganic phosphate transporter PitA (499 aa).

Residues 1-4 (MLHL) lie on the Periplasmic side of the membrane. A helical membrane pass occupies residues 5–25 (FAGLDLHTGLLLLLALAFVLF). Residues 26–51 (YEAINGFHDTANAVATVIYTRAMRSQ) lie on the Cytoplasmic side of the membrane. A helical membrane pass occupies residues 52-72 (LAVVMAAVFNFLGVLLGGLSV). The Periplasmic segment spans residues 73-93 (AYAIVHMLPTDLLLNMGSSHG). Residues 94 to 114 (LAMVFSMLLAAIIWNLGTWYF) form a helical membrane-spanning segment. Residues 115 to 123 (GLPASSSHT) lie on the Cytoplasmic side of the membrane. The chain crosses the membrane as a helical span at residues 124-144 (LIGAIIGIGLTNALMTGTSVV). Residues 145 to 154 (DALNIPKVLS) are Periplasmic-facing. The chain crosses the membrane as a helical span at residues 155–175 (IFGSLIVSPIVGLVFAGGLIF). The Cytoplasmic segment spans residues 176 to 206 (LLRRYWSGTKKRARIHLTPAEREKKDGKKKP). A helical membrane pass occupies residues 207–227 (PFWTRIALILSAIGVAFSHGA). Residues 228–232 (NDGQK) are Periplasmic-facing. A helical transmembrane segment spans residues 233–253 (GIGLVMLVLIGVAPAGFVVNM). Over 254–381 (NATGYEITRT…KSDMLSTIEY (128 aa)) the chain is Cytoplasmic. A helical membrane pass occupies residues 382–402 (APVWIIMAVALALGIGTMIGW). Residues 403–429 (RRVATTIGEKIGKKGMTYAQGMSAQMT) are Periplasmic-facing. Residues 430–450 (AAVSIGLASYTGMPVSTTHVL) form a helical membrane-spanning segment. Topologically, residues 451 to 472 (SSSVAGTMVVDGGGLQRKTVTS) are cytoplasmic. Residues 473–493 (ILMAWVFTLPAAVLLSGGLYW) form a helical membrane-spanning segment. Residues 494 to 499 (LSLQFL) lie on the Periplasmic side of the membrane.

Belongs to the inorganic phosphate transporter (PiT) (TC 2.A.20) family. Pit subfamily.

The protein resides in the cell inner membrane. The catalysed reaction is phosphate(in) + H(+)(in) = phosphate(out) + H(+)(out). In terms of biological role, low-affinity inorganic phosphate transporter. The chain is Low-affinity inorganic phosphate transporter PitA (pitA) from Escherichia coli O157:H7.